A 482-amino-acid polypeptide reads, in one-letter code: Cardiolipin synthase (482 aa).

Helical transmembrane passes span 4-24 (LAYLLVILLILNVFFAAVTVF) and 34-54 (WAWLLVLTFVPIFGFIIYLIF). 2 PLD phosphodiesterase domains span residues 217-244 (LNYRNHRKLAIIDGDVGYIGGFNIGDEY) and 395-422 (DNGFIHAKTLVVDGEIASVGTANMDFRS). Catalysis depends on residues His222, Lys224, Asp229, His400, Lys402, and Asp407.

It belongs to the phospholipase D family. Cardiolipin synthase subfamily.

Its subcellular location is the cell membrane. It catalyses the reaction 2 a 1,2-diacyl-sn-glycero-3-phospho-(1'-sn-glycerol) = a cardiolipin + glycerol. Catalyzes the reversible phosphatidyl group transfer from one phosphatidylglycerol molecule to another to form cardiolipin (CL) (diphosphatidylglycerol) and glycerol. In Listeria monocytogenes serotype 4b (strain CLIP80459), this protein is Cardiolipin synthase (cls).